The sequence spans 315 residues: Homoserine kinase (315 aa).

An ATP-binding site is contributed by 97–107; it reads PPARGLGSSAT.

It belongs to the GHMP kinase family. Homoserine kinase subfamily.

Its subcellular location is the cytoplasm. The enzyme catalyses L-homoserine + ATP = O-phospho-L-homoserine + ADP + H(+). It participates in amino-acid biosynthesis; L-threonine biosynthesis; L-threonine from L-aspartate: step 4/5. Its function is as follows. Catalyzes the ATP-dependent phosphorylation of L-homoserine to L-homoserine phosphate. In Prochlorococcus marinus (strain NATL2A), this protein is Homoserine kinase.